Consider the following 1787-residue polypeptide: Chromodomain-helicase-DNA-binding protein 3 homolog (1787 aa).

Disordered regions lie at residues 1–80 (MSDD…PDPY) and 170–258 (PVTP…KEQG). A compositionally biased stretch (acidic residues) spans 10–43 (DGDETMEEDSMLAEGHEDGEEDVGEDEEEVETEE). Over residues 56–71 (PPPKKKKGGKKSSKKK) the composition is skewed to basic residues. A compositionally biased stretch (basic and acidic residues) spans 192–243 (DGSDGEGGGHDSDQEFEALIKQHEKQQDEAEKGKEEARINRAAAKVDKRKAA). 2 PHD-type zinc fingers span residues 265-312 (QENC…CEEH) and 328-375 (MDYC…CIIP). Chromo domains are found at residues 373–476 (IIPE…STLS) and 501–583 (MQIH…GPKE). The Helicase ATP-binding domain maps to 628-812 (RHCWSNGTDA…FHLLNFLAPD (185 aa)). 641 to 648 (DEMGLGKT) contacts ATP. The short motif at 763 to 766 (DEAH) is the DEAH box element. Residues 944–1107 (LLQKMLRKLK…GKSMSKTELD (164 aa)) form the Helicase C-terminal domain. Disordered stretches follow at residues 1120–1141 (EEEA…PNEQ), 1186–1212 (TKEA…QDPN), 1248–1295 (ENMG…EERS), and 1754–1787 (RASS…YPRY). Residues 1190–1199 (DDADDDEDET) show a composition bias toward acidic residues. Positions 1248–1261 (ENMGQDWSAQNNQQ) are enriched in polar residues. Residues 1761–1773 (TKDEPMDTSDKDI) show a composition bias toward basic and acidic residues.

It belongs to the SNF2/RAD54 helicase family. Expressed in the head and vulva.

Its subcellular location is the nucleus. The catalysed reaction is ATP + H2O = ADP + phosphate + H(+). In terms of biological role, ATP-dependent chromatin-remodeling factor that has a role in notch signaling-dependent vulval cell fate determination. May also have a role in pharyngeal precursor cell specification. In Caenorhabditis elegans, this protein is Chromodomain-helicase-DNA-binding protein 3 homolog (chd-3).